The primary structure comprises 356 residues: tRNA N6-adenosine threonylcarbamoyltransferase (356 aa).

Residues histidine 114 and histidine 118 each coordinate Fe cation. Substrate is bound by residues 136-140, aspartate 169, glycine 182, and asparagine 280; that span reads LVSGG. Aspartate 308 contacts Fe cation. A disordered region spans residues 333–356; it reads ARPRWPLDNSQPALLGSGKKGAKA.

Belongs to the KAE1 / TsaD family. Fe(2+) is required as a cofactor.

Its subcellular location is the cytoplasm. It carries out the reaction L-threonylcarbamoyladenylate + adenosine(37) in tRNA = N(6)-L-threonylcarbamoyladenosine(37) in tRNA + AMP + H(+). Functionally, required for the formation of a threonylcarbamoyl group on adenosine at position 37 (t(6)A37) in tRNAs that read codons beginning with adenine. Is involved in the transfer of the threonylcarbamoyl moiety of threonylcarbamoyl-AMP (TC-AMP) to the N6 group of A37, together with TsaE and TsaB. TsaD likely plays a direct catalytic role in this reaction. The protein is tRNA N6-adenosine threonylcarbamoyltransferase of Dinoroseobacter shibae (strain DSM 16493 / NCIMB 14021 / DFL 12).